The chain runs to 417 residues: Calreticulin (417 aa).

Positions 1 to 17 (MLLPVPLLLGLVGLAAA) are cleaved as a signal peptide. The interval 18-197 (EPTIYFKEQF…NSQVESGSLE (180 aa)) is N-domain. Ca(2+)-binding residues include Gln-26, Lys-62, and Lys-64. At Lys-64 the chain carries N6-(2-hydroxyisobutyryl)lysine. Residues Tyr-109, Lys-111, Tyr-128, and Asp-135 each contribute to the an alpha-D-glucoside site. A disulfide bridge links Cys-137 with Cys-163. An N6-acetyllysine modification is found at Lys-159. One copy of the 1-1 repeat lies at 191 to 202 (VESGSLEDDWDF). The 4 X approximate repeats stretch occupies residues 191–255 (VESGSLEDDW…DAKKPEDWDE (65 aa)). Positions 193–277 (SGSLEDDWDF…NPEYKGEWKP (85 aa)) are disordered. A P-domain region spans residues 198 to 308 (DDWDFLPPKK…YSPDSNIYAY (111 aa)). The span at 207 to 251 (KIKDPDAVKPEDWDERAKIDDPTDSKPEDWDKPEHIPDPDAKKPE) shows a compositional bias: basic and acidic residues. Lys-209 carries the N6-acetyllysine modification. 6 consecutive repeat copies span residues 210–221 (DPDAVKPEDWDE), 227–238 (DPTDSKPEDWDK), 244–255 (DPDAKKPEDWDE), 259–269 (GEWEPPVIQNP), 273–283 (GEWKPRQIDNP), and 287–297 (GTWIHPEIDNP). The interval 237–270 (DKPEHIPDPDAKKPEDWDEEMDGEWEPPVIQNPE) is interaction with PPIB. Over residues 252-261 (DWDEEMDGEW) the composition is skewed to acidic residues. Residues 259–297 (GEWEPPVIQNPEYKGEWKPRQIDNPDYKGTWIHPEIDNP) form a 3 X approximate repeats region. A C-domain region spans residues 309–417 (ENFAVLGLDL…AAAGQAKDEL (109 aa)). Residue Asp-317 coordinates an alpha-D-glucoside. Asp-328 is a binding site for Ca(2+). A disordered region spans residues 350–417 (TKAAEKQMKD…AAAGQAKDEL (68 aa)). Residues 352 to 379 (AAEKQMKDKQDEEQRLKEEEEEKKRKEE) show a composition bias toward basic and acidic residues. The segment covering 380–408 (EEVDKEDEEDKDEDEEEEDEKEEEEEEDA) has biased composition (acidic residues). Positions 414–417 (KDEL) match the Prevents secretion from ER motif.

This sequence belongs to the calreticulin family. In terms of assembly, monomer. Component of an EIF2 complex at least composed of CELF1/CUGBP1, CALR, CALR3, EIF2S1, EIF2S2, HSP90B1 and HSPA5. Interacts with PDIA3/ERp57 and SPACA9. Interacts with TRIM21. Interacts with NR3C1. Interacts with PPIB. Interacts (via P-domain) with PDIA5. Interacts with CLCC1. As to expression, in blastocyst expressed in all blastomeres (at protein level). In embryos, expressed in spleen, kidney, liver, fat, muscle, ovary, granulosa cells and cumulus cells.

It is found in the endoplasmic reticulum lumen. It localises to the cytoplasm. The protein localises to the cytosol. Its subcellular location is the secreted. The protein resides in the extracellular space. It is found in the extracellular matrix. It localises to the cell surface. The protein localises to the sarcoplasmic reticulum lumen. Its subcellular location is the cytoplasmic vesicle. The protein resides in the secretory vesicle. It is found in the cortical granule. It localises to the cytolytic granule. In terms of biological role, calcium-binding chaperone that promotes folding, oligomeric assembly and quality control in the endoplasmic reticulum (ER) via the calreticulin/calnexin cycle. This lectin interacts transiently with almost all of the monoglucosylated glycoproteins that are synthesized in the ER. Interacts with the DNA-binding domain of NR3C1 and mediates its nuclear export. Involved in maternal gene expression regulation. May participate in oocyte maturation via the regulation of calcium homeostasis. Present in the cortical granules of non-activated oocytes, is exocytosed during the cortical reaction in response to oocyte activation and might participate in the block to polyspermy. This Sus scrofa (Pig) protein is Calreticulin (CALR).